A 112-amino-acid chain; its full sequence is UPF0102 protein CHAB381_0216 (112 aa).

The protein belongs to the UPF0102 family.

The sequence is that of UPF0102 protein CHAB381_0216 from Campylobacter hominis (strain ATCC BAA-381 / DSM 21671 / CCUG 45161 / LMG 19568 / NCTC 13146 / CH001A).